Reading from the N-terminus, the 495-residue chain is Histidine--tRNA ligase (495 aa).

The segment covering 1 to 10 has biased composition (polar residues); the sequence is MTTDSEQPNT. The interval 1–24 is disordered; the sequence is MTTDSEQPNTDFRPEARAPRGFAD. A compositionally biased stretch (basic and acidic residues) spans 12-24; the sequence is FRPEARAPRGFAD.

Belongs to the class-II aminoacyl-tRNA synthetase family. In terms of assembly, homodimer.

The protein resides in the cytoplasm. The catalysed reaction is tRNA(His) + L-histidine + ATP = L-histidyl-tRNA(His) + AMP + diphosphate + H(+). This is Histidine--tRNA ligase (hisS) from Caulobacter vibrioides (strain ATCC 19089 / CIP 103742 / CB 15) (Caulobacter crescentus).